Consider the following 237-residue polypeptide: Large ribosomal subunit protein uL3 (237 aa).

2 disordered regions span residues 133-155 (ASHG…DPGK) and 213-237 (PENA…EGAE). Over residues 135–150 (HGNSITHRSHGSTGQR) the composition is skewed to polar residues. Position 151 is an N5-methylglutamine (Gln-151). Over residues 220 to 237 (AGLRAGAKAEAAATEGAE) the composition is skewed to low complexity.

This sequence belongs to the universal ribosomal protein uL3 family. Part of the 50S ribosomal subunit. Forms a cluster with proteins L14 and L19. In terms of processing, methylated by PrmB.

In terms of biological role, one of the primary rRNA binding proteins, it binds directly near the 3'-end of the 23S rRNA, where it nucleates assembly of the 50S subunit. This is Large ribosomal subunit protein uL3 from Brucella suis biovar 1 (strain 1330).